Here is a 282-residue protein sequence, read N- to C-terminus: Epoxide hydrolase LasB (282 aa).

The interval 1–133 (MPAETVRKEV…TDSSWTARPA (133 aa)) is lsd19A. Y14 contacts substrate. The active-site Proton acceptor; for 5-exo epoxide-opening cyclization activity is the D38. Residues E65 and H146 each contribute to the substrate site. The segment at 134 to 282 (PDEERRKELA…TDVSLLDPAA (149 aa)) is lsd19B. The active-site Proton acceptor; for 6-endo epoxide-opening cyclization activity is the D170. Positions 177, 197, and 251 each coordinate substrate.

In terms of biological role, epoxide hydrolase responsible for the double epoxide-opening cyclization of bisepoxyprelasalocid A to form lasalocid A, a polyether antibiotic. In vitro, accepts various substrate analogs differing in the left segment of lasalocid and epoxide stereochemistry to afford products with excellent regioselectivity. This chain is Epoxide hydrolase LasB (lsd19), found in Streptomyces lasalocidi (Streptomyces lasaliensis).